Here is a 294-residue protein sequence, read N- to C-terminus: Dolichol-phosphate mannosyltransferase (294 aa).

The interval 1–27 (MSIALDMDASAKMRKQPGSSGWSTSST) is disordered. At 1–263 (MSIALDMDAS…QQLVELYRFR (263 aa)) the chain is on the cytoplasmic side. Over residues 17–27 (PGSSGWSTSST) the composition is skewed to low complexity. GDP-alpha-D-mannose contacts are provided by P35, E39, V70, D72, D123, A124, D125, Q127, R151, K211, R237, and K243. Residues D125 and Q127 each contribute to the Mg(2+) site. Mn(2+) contacts are provided by D125 and Q127. Residues 264-284 (FGTVPIVFVLIVLLVLALYIW) form a helical membrane-spanning segment. At 285–294 (SHVLAPMLGA) the chain is on the lumenal side.

It belongs to the glycosyltransferase 2 family. It depends on Mg(2+) as a cofactor. Mn(2+) serves as cofactor. Requires Ca(2+) as cofactor.

The protein localises to the endoplasmic reticulum membrane. It carries out the reaction a di-trans,poly-cis-dolichyl phosphate + GDP-alpha-D-mannose = a di-trans,poly-cis-dolichyl beta-D-mannosyl phosphate + GDP. It functions in the pathway protein modification; protein glycosylation. Its function is as follows. Transfers mannose from GDP-mannose to dolichol monophosphate to form dolichol phosphate mannose (Dol-P-Man) which is the mannosyl donor in pathways leading to N-glycosylation, glycosyl phosphatidylinositol membrane anchoring, and O-mannosylation of proteins. The protein is Dolichol-phosphate mannosyltransferase (DPM1) of Mycosarcoma maydis (Corn smut fungus).